Consider the following 389-residue polypeptide: N-terminal EF-hand calcium-binding protein 2 (389 aa).

The residue at position 10 (R10) is an Omega-N-methylarginine. Asymmetric dimethylarginine is present on R42. EF-hand domains follow at residues 63 to 98 (GGTA…GVLN) and 99 to 132 (EKEL…HMGD). Residues D76, N78, D80, K82, E87, D110, D112, T114, H116, and E121 each coordinate Ca(2+). Residues 173–198 (LKETANQIQSLLSSVESAVEAIEEQT) are a coiled coil. Positions 289 to 377 (QLVRQEMAVC…LSQPEALSQI (89 aa)) constitute an ABM domain.

As to quaternary structure, interacts (calcium-dependent) with ADORA2A and GRM5. Expressed in the iris, in the ciliary margin of the retina and in the inner portion of the neural retina. Expressed in the spinal dorsal horn with especially strong expression in lamina IIi; found in excitory synaptic boutons (at protein level).

It is found in the cytoplasm. The protein localises to the cell projection. The protein resides in the dendrite. It localises to the axon. Its subcellular location is the cell membrane. May act as a signaling scaffold protein that senses intracellular calcium. Can modulate ligand-induced internalization of ADORA2A and coupling efficiency of mGluR5/GRM5; for both receptors may regulate signaling activity such as promoting MAPK1/3 (ERK1/2) activation. This Mus musculus (Mouse) protein is N-terminal EF-hand calcium-binding protein 2 (Necab2).